The chain runs to 242 residues: 1-(5-phosphoribosyl)-5-[(5-phosphoribosylamino)methylideneamino] imidazole-4-carboxamide isomerase (242 aa).

The active-site Proton acceptor is D7. D129 functions as the Proton donor in the catalytic mechanism.

This sequence belongs to the HisA/HisF family.

It localises to the cytoplasm. It catalyses the reaction 1-(5-phospho-beta-D-ribosyl)-5-[(5-phospho-beta-D-ribosylamino)methylideneamino]imidazole-4-carboxamide = 5-[(5-phospho-1-deoxy-D-ribulos-1-ylimino)methylamino]-1-(5-phospho-beta-D-ribosyl)imidazole-4-carboxamide. The protein operates within amino-acid biosynthesis; L-histidine biosynthesis; L-histidine from 5-phospho-alpha-D-ribose 1-diphosphate: step 4/9. The polypeptide is 1-(5-phosphoribosyl)-5-[(5-phosphoribosylamino)methylideneamino] imidazole-4-carboxamide isomerase (Pseudoalteromonas translucida (strain TAC 125)).